The following is a 349-amino-acid chain: Gibberellin 3-beta-dioxygenase 3 (349 aa).

The Fe2OG dioxygenase domain occupies 201–305 (SIQSFLQLNS…RVSAAYFAGP (105 aa)). 3 residues coordinate Fe cation: His-226, Asp-228, and His-286. The active site involves Arg-296.

This sequence belongs to the iron/ascorbate-dependent oxidoreductase family. GA3OX subfamily. L-ascorbate serves as cofactor. Requires Fe cation as cofactor. As to expression, expressed in flower clusters and siliques.

The enzyme catalyses gibberellin A20 + 2-oxoglutarate + O2 = gibberellin A1 + succinate + CO2. It participates in plant hormone biosynthesis; gibberellin biosynthesis. Converts the inactive gibberellin (GA) precursors GA9 and GA20 in the bioactives gibberellins GA4 and GA1. Involved in the production of bioactive GA for reproductive development. In Arabidopsis thaliana (Mouse-ear cress), this protein is Gibberellin 3-beta-dioxygenase 3 (GA3OX3).